Here is a 117-residue protein sequence, read N- to C-terminus: MDMRVPAQLLGLLLLWVPGARCDIQLTQSPSSLSASVGDRVTITCRVSQGISSYLNWYRQKPGKVPKLLIYSASNLQSGVPSRFSGSGSGTDFTLTISSLQPEDVATYYGQRTYNAP.

An N-terminal signal peptide occupies residues 1 to 22; the sequence is MDMRVPAQLLGLLLLWVPGARC. Positions 24 to 117 constitute an Ig-like domain; it reads IQLTQSPSSL…YYGQRTYNAP (94 aa).

Most probably, the immunoglobulin is not assembled due to incorrect folding of light chain. Immunoglobulins are composed of two identical heavy chains and two identical light chains; disulfide-linked.

It is found in the secreted. The protein localises to the cell membrane. Its function is as follows. Probable non-functional open reading frame (ORF) of V region of the variable domain of immunoglobulin light chains. Non-functional ORF generally cannot participate in the synthesis of a productive immunoglobulin chain due to altered V-(D)-J or switch recombination and/or splicing site (at mRNA level) and/or conserved amino acid change (protein level). Immunoglobulins, also known as antibodies, are membrane-bound or secreted glycoproteins produced by B lymphocytes. In the recognition phase of humoral immunity, the membrane-bound immunoglobulins serve as receptors which, upon binding of a specific antigen, trigger the clonal expansion and differentiation of B lymphocytes into immunoglobulins-secreting plasma cells. Secreted immunoglobulins mediate the effector phase of humoral immunity, which results in the elimination of bound antigens. The antigen binding site is formed by the variable domain of one heavy chain, together with that of its associated light chain. Thus, each immunoglobulin has two antigen binding sites with remarkable affinity for a particular antigen. The variable domains are assembled by a process called V-(D)-J rearrangement and can then be subjected to somatic hypermutations which, after exposure to antigen and selection, allow affinity maturation for a particular antigen. The sequence is that of Probable non-functional immunoglobulinn kappa variable 1-37 from Homo sapiens (Human).